A 22-amino-acid polypeptide reads, in one-letter code: Cysteine protease inhibitor 4 (22 aa).

Belongs to the protease inhibitor I3 (leguminous Kunitz-type inhibitor) family. In terms of tissue distribution, tubers.

Its subcellular location is the vacuole. Inhibitor of papain (cysteine protease). Does not inhibit trypsin, chymotrypsin nor elastase (serine proteases). May protect the plant by inhibiting proteases of invading organisms. This chain is Cysteine protease inhibitor 4, found in Solanum tuberosum (Potato).